The following is a 549-amino-acid chain: Glucose-6-phosphate isomerase (549 aa).

E355 acts as the Proton donor in catalysis. Residues H386 and K514 contribute to the active site.

This sequence belongs to the GPI family.

It localises to the cytoplasm. It catalyses the reaction alpha-D-glucose 6-phosphate = beta-D-fructose 6-phosphate. Its pathway is carbohydrate biosynthesis; gluconeogenesis. It participates in carbohydrate degradation; glycolysis; D-glyceraldehyde 3-phosphate and glycerone phosphate from D-glucose: step 2/4. Its function is as follows. Catalyzes the reversible isomerization of glucose-6-phosphate to fructose-6-phosphate. The polypeptide is Glucose-6-phosphate isomerase (Salmonella gallinarum (strain 287/91 / NCTC 13346)).